We begin with the raw amino-acid sequence, 457 residues long: Argininosuccinate lyase (457 aa).

The protein belongs to the lyase 1 family. Argininosuccinate lyase subfamily.

The protein localises to the cytoplasm. The catalysed reaction is 2-(N(omega)-L-arginino)succinate = fumarate + L-arginine. Its pathway is amino-acid biosynthesis; L-arginine biosynthesis; L-arginine from L-ornithine and carbamoyl phosphate: step 3/3. The chain is Argininosuccinate lyase from Haemophilus influenzae (strain 86-028NP).